Here is a 413-residue protein sequence, read N- to C-terminus: Queuine tRNA-ribosyltransferase accessory subunit 2 (413 aa).

The disordered stretch occupies residues 298 to 321 (LEKSETSGAERNGDVGAESEEPDA). Zn(2+) is bound by residues cysteine 349, cysteine 351, cysteine 354, and histidine 380.

It belongs to the queuine tRNA-ribosyltransferase family. QTRT2 subfamily. As to quaternary structure, heterodimer of a catalytic subunit qtrt1 and an accessory subunit qtrt2. Zn(2+) serves as cofactor.

It is found in the cytoplasm. The protein resides in the mitochondrion outer membrane. Functionally, non-catalytic subunit of the queuine tRNA-ribosyltransferase (TGT) that catalyzes the base-exchange of a guanine (G) residue with queuine (Q) at position 34 (anticodon wobble position) in tRNAs with GU(N) anticodons (tRNA-Asp, -Asn, -His and -Tyr), resulting in the hypermodified nucleoside queuosine (7-(((4,5-cis-dihydroxy-2-cyclopenten-1-yl)amino)methyl)-7-deazaguanosine). This Xenopus tropicalis (Western clawed frog) protein is Queuine tRNA-ribosyltransferase accessory subunit 2.